The sequence spans 419 residues: Phosphoglycerate kinase (419 aa).

Substrate-binding positions include 21 to 23 (DFN), arginine 36, 60 to 63 (HLGD), arginine 137, and arginine 174. ATP-binding positions include lysine 225, glycine 316, glutamate 347, and 376 to 379 (GGDS).

Belongs to the phosphoglycerate kinase family. As to quaternary structure, monomer.

It localises to the cytoplasm. It carries out the reaction (2R)-3-phosphoglycerate + ATP = (2R)-3-phospho-glyceroyl phosphate + ADP. It participates in carbohydrate degradation; glycolysis; pyruvate from D-glyceraldehyde 3-phosphate: step 2/5. This Treponema pallidum (strain Nichols) protein is Phosphoglycerate kinase (pgk).